A 115-amino-acid polypeptide reads, in one-letter code: Meiotically up-regulated gene 42 protein (115 aa).

Has a role in meiosis. The polypeptide is Meiotically up-regulated gene 42 protein (mug42) (Schizosaccharomyces pombe (strain 972 / ATCC 24843) (Fission yeast)).